We begin with the raw amino-acid sequence, 610 residues long: UvrABC system protein C (610 aa).

In terms of domain architecture, GIY-YIG spans 19–97; that stretch reads GAPGVYKMLD…IKRHKPRYNI (79 aa). The 36-residue stretch at 207-242 folds into the UVR domain; it reads EALIDRLAQRMEQAAQRLEFEKAARYRDQISNLRTV.

This sequence belongs to the UvrC family. As to quaternary structure, interacts with UvrB in an incision complex.

Its subcellular location is the cytoplasm. The UvrABC repair system catalyzes the recognition and processing of DNA lesions. UvrC both incises the 5' and 3' sides of the lesion. The N-terminal half is responsible for the 3' incision and the C-terminal half is responsible for the 5' incision. The protein is UvrABC system protein C of Methylococcus capsulatus (strain ATCC 33009 / NCIMB 11132 / Bath).